The primary structure comprises 110 residues: Plasma membrane ATPase (110 aa).

Residues D72 and D76 each coordinate Mg(2+). The interval A88–K110 is disordered. Positions N98 to K110 are enriched in basic and acidic residues.

It belongs to the cation transport ATPase (P-type) (TC 3.A.3) family. Type IIIA subfamily. Post-translationally, the N-terminus is blocked.

It is found in the cell membrane. The enzyme catalyses ATP + H2O + H(+)(in) = ADP + phosphate + 2 H(+)(out). In terms of biological role, the plasma membrane ATPase of plants and fungi is a hydrogen ion pump. The proton gradient it generates drives the active transport of nutrients by H(+)-symport. The resulting external acidification and/or internal alkinization may mediate growth responses. This is Plasma membrane ATPase from Avena sativa (Oat).